The following is a 344-amino-acid chain: UDP-glycosyltransferase 73C4 (344 aa).

UDP-alpha-D-glucose contacts are provided by residues Ser145, 202-203, 220-228, and 242-245; these read WA, HCGWNSSLE, and FAEQ.

It belongs to the UDP-glycosyltransferase family. As to expression, expressed in flowers and fruits.

The protein resides in the cytoplasm. The protein localises to the nucleus. In terms of biological role, probable glucosyltransferase that cannot glycosylate abscisic acid (ABA) and auxin (IAA). This Solanum lycopersicum (Tomato) protein is UDP-glycosyltransferase 73C4.